The chain runs to 132 residues: Large ribosomal subunit protein bL17 (132 aa).

This sequence belongs to the bacterial ribosomal protein bL17 family. Part of the 50S ribosomal subunit. Contacts protein L32.

This is Large ribosomal subunit protein bL17 from Ruthia magnifica subsp. Calyptogena magnifica.